The primary structure comprises 470 residues: DNA primase large subunit (470 aa).

[4Fe-4S] cluster is bound by residues C279, C358, C376, and C414. The segment at 449-470 (EEKKSAKQSNNKENENQSIDEK) is disordered.

It belongs to the eukaryotic-type primase large subunit family. In terms of assembly, heterodimer of a small subunit and a large subunit. [4Fe-4S] cluster serves as cofactor.

Functionally, DNA primase is the polymerase that synthesizes small RNA primers for the Okazaki fragments made during discontinuous DNA replication. The chain is DNA primase large subunit (prim2) from Dictyostelium discoideum (Social amoeba).